The primary structure comprises 331 residues: Probable inactive O-methyltransferase 11 (331 aa).

S-adenosyl-L-methionine-binding positions include glycine 179, aspartate 202, 224–226, aspartate 225, phenylalanine 226, and lysine 239; that span reads GDF.

Belongs to the class I-like SAM-binding methyltransferase superfamily. Cation-independent O-methyltransferase family. COMT subfamily.

The sequence is that of Probable inactive O-methyltransferase 11 (omt11) from Dictyostelium discoideum (Social amoeba).